A 356-amino-acid polypeptide reads, in one-letter code: 3-isopropylmalate dehydrogenase (356 aa).

Residues Arg-90, Arg-100, Arg-128, and Asp-222 each coordinate substrate. Mg(2+) is bound by residues Asp-222, Asp-246, and Asp-250. Gly-280–Asn-292 provides a ligand contact to NAD(+).

Belongs to the isocitrate and isopropylmalate dehydrogenases family. LeuB type 1 subfamily. As to quaternary structure, homodimer. Requires Mg(2+) as cofactor. Mn(2+) serves as cofactor.

The protein resides in the cytoplasm. It catalyses the reaction (2R,3S)-3-isopropylmalate + NAD(+) = 4-methyl-2-oxopentanoate + CO2 + NADH. It functions in the pathway amino-acid biosynthesis; L-leucine biosynthesis; L-leucine from 3-methyl-2-oxobutanoate: step 3/4. Catalyzes the oxidation of 3-carboxy-2-hydroxy-4-methylpentanoate (3-isopropylmalate) to 3-carboxy-4-methyl-2-oxopentanoate. The product decarboxylates to 4-methyl-2 oxopentanoate. In Albidiferax ferrireducens (strain ATCC BAA-621 / DSM 15236 / T118) (Rhodoferax ferrireducens), this protein is 3-isopropylmalate dehydrogenase.